The following is a 187-amino-acid chain: Tetraheme c-type cytochrome CymA (187 aa).

Residues 1–12 (MNWRALFKPSAK) lie on the Cytoplasmic side of the membrane. A helical membrane pass occupies residues 13 to 33 (YSILALLVVGIVIGVVGYFAT). Residues 34–187 (QQTLHATSTD…KGVAHPYPKG (154 aa)) are Periplasmic-facing. Cys-46, Cys-49, His-64, Cys-75, Cys-78, His-79, Asp-97, Cys-136, Cys-139, His-140, Cys-173, Cys-176, His-177, and His-182 together coordinate heme c.

The protein belongs to the NapC/NirT/NrfH family. As to quaternary structure, homodimer. Heme c serves as cofactor.

It is found in the cell inner membrane. It catalyses the reaction a quinol + 2 Fe(III)-[cytochrome c](out) = a quinone + 2 Fe(II)-[cytochrome c](out) + 2 H(+)(out). With respect to regulation, spectroscopic studies suggest that CymA requires a non-heme cofactor for quinol oxidation. Quinol dehydrogenase involved in several anaerobic electron transfer pathways. Acquires electrons from the membrane quinone pool and mediates their transfer to several periplasmic terminal reductases and redox shuttles, including the fumarate reductase FccA, the small tetraheme cytochrome (STC), the c-type cytochrome MtrA, the nitrate reductase NapA (either through NapB or directly), the nitrite reductase NrfA and probably also the DmsE subunit of dimethyl sulfoxide (DMSO) reductase. Required for growth on fumarate and on DMSO, and for the reduction of iron(III), manganese(IV), nitrite and nitrate. Not essential for growth on trimethylamine-N-oxide (TMAO). This is Tetraheme c-type cytochrome CymA from Shewanella oneidensis (strain ATCC 700550 / JCM 31522 / CIP 106686 / LMG 19005 / NCIMB 14063 / MR-1).